Consider the following 221-residue polypeptide: Endo-1,4-beta-xylanase 1 (221 aa).

Positions 1–22 (MKFFATIAALVVAAVAAPVAEA) are cleaved as a signal peptide. The GH11 domain maps to 29–221 (PMLIERAGPG…GTGSASVTVS (193 aa)). Glu-114 functions as the Nucleophile in the catalytic mechanism. Catalysis depends on Glu-208, which acts as the Proton donor.

This sequence belongs to the glycosyl hydrolase 11 (cellulase G) family.

The protein localises to the secreted. It carries out the reaction Endohydrolysis of (1-&gt;4)-beta-D-xylosidic linkages in xylans.. It participates in glycan degradation; xylan degradation. Functionally, endo-1,4-beta-xylanase involved in the hydrolysis of xylan, a major structural heterogeneous polysaccharide found in plant biomass representing the second most abundant polysaccharide in the biosphere, after cellulose. Hydrolyzes xylans from oat spelt and birchwood at similar rates, but it has no detectable activity toward Avicel or carboxymethyl cellulose. This is Endo-1,4-beta-xylanase 1 (xynI) from Aureobasidium pullulans (Black yeast).